We begin with the raw amino-acid sequence, 441 residues long: 3-phosphoshikimate 1-carboxyvinyltransferase (441 aa).

Residues Lys-22, Ser-23, and Arg-27 each contribute to the 3-phosphoshikimate site. Phosphoenolpyruvate is bound at residue Lys-22. Residues Gly-95 and Arg-123 each contribute to the phosphoenolpyruvate site. Ser-168, Gln-170, Asp-321, and Lys-348 together coordinate 3-phosphoshikimate. Phosphoenolpyruvate is bound at residue Gln-170. The active-site Proton acceptor is Asp-321. Arg-352 and Arg-400 together coordinate phosphoenolpyruvate.

The protein belongs to the EPSP synthase family. In terms of assembly, monomer.

It is found in the cytoplasm. The catalysed reaction is 3-phosphoshikimate + phosphoenolpyruvate = 5-O-(1-carboxyvinyl)-3-phosphoshikimate + phosphate. It participates in metabolic intermediate biosynthesis; chorismate biosynthesis; chorismate from D-erythrose 4-phosphate and phosphoenolpyruvate: step 6/7. Functionally, catalyzes the transfer of the enolpyruvyl moiety of phosphoenolpyruvate (PEP) to the 5-hydroxyl of shikimate-3-phosphate (S3P) to produce enolpyruvyl shikimate-3-phosphate and inorganic phosphate. In Novosphingobium aromaticivorans (strain ATCC 700278 / DSM 12444 / CCUG 56034 / CIP 105152 / NBRC 16084 / F199), this protein is 3-phosphoshikimate 1-carboxyvinyltransferase.